A 342-amino-acid polypeptide reads, in one-letter code: L-threonine 3-dehydrogenase (342 aa).

Cysteine 38 contributes to the Zn(2+) binding site. Active-site charge relay system residues include threonine 40 and histidine 43. Residues histidine 63, glutamate 64, cysteine 93, cysteine 96, cysteine 99, and cysteine 107 each contribute to the Zn(2+) site. Residues isoleucine 175, aspartate 195, arginine 200, 262–264, and 286–287 contribute to the NAD(+) site; these read LGI and IY.

The protein belongs to the zinc-containing alcohol dehydrogenase family. In terms of assembly, homotetramer. Zn(2+) serves as cofactor.

Its subcellular location is the cytoplasm. It catalyses the reaction L-threonine + NAD(+) = (2S)-2-amino-3-oxobutanoate + NADH + H(+). Its pathway is amino-acid degradation; L-threonine degradation via oxydo-reductase pathway; glycine from L-threonine: step 1/2. Functionally, catalyzes the NAD(+)-dependent oxidation of L-threonine to 2-amino-3-ketobutyrate. This Burkholderia ambifaria (strain MC40-6) protein is L-threonine 3-dehydrogenase.